Here is an 89-residue protein sequence, read N- to C-terminus: Large ribosomal subunit protein bL28 (89 aa).

The protein belongs to the bacterial ribosomal protein bL28 family.

The polypeptide is Large ribosomal subunit protein bL28 (Chlamydia muridarum (strain MoPn / Nigg)).